A 398-amino-acid polypeptide reads, in one-letter code: Acetate kinase (398 aa).

A Mg(2+)-binding site is contributed by asparagine 7. An ATP-binding site is contributed by lysine 14. Arginine 91 provides a ligand contact to substrate. Aspartate 148 (proton donor/acceptor) is an active-site residue. ATP contacts are provided by residues 208–212 (HIGNG), 283–285 (DMR), and 331–335 (GVGEN). Glutamate 385 serves as a coordination point for Mg(2+).

Belongs to the acetokinase family. In terms of assembly, homodimer. Mg(2+) is required as a cofactor. Mn(2+) serves as cofactor.

It is found in the cytoplasm. The catalysed reaction is acetate + ATP = acetyl phosphate + ADP. It functions in the pathway metabolic intermediate biosynthesis; acetyl-CoA biosynthesis; acetyl-CoA from acetate: step 1/2. In terms of biological role, catalyzes the formation of acetyl phosphate from acetate and ATP. Can also catalyze the reverse reaction. This chain is Acetate kinase, found in Porphyromonas gingivalis (strain ATCC BAA-308 / W83).